Here is a 136-residue protein sequence, read N- to C-terminus: Transcription antitermination protein NusB (136 aa).

The protein belongs to the NusB family.

In terms of biological role, involved in transcription antitermination. Required for transcription of ribosomal RNA (rRNA) genes. Binds specifically to the boxA antiterminator sequence of the ribosomal RNA (rrn) operons. This Treponema denticola (strain ATCC 35405 / DSM 14222 / CIP 103919 / JCM 8153 / KCTC 15104) protein is Transcription antitermination protein NusB.